Reading from the N-terminus, the 196-residue chain is ATP-dependent Clp protease proteolytic subunit (196 aa).

Serine 99 acts as the Nucleophile in catalysis. Histidine 124 is an active-site residue.

The protein belongs to the peptidase S14 family. As to quaternary structure, fourteen ClpP subunits assemble into 2 heptameric rings which stack back to back to give a disk-like structure with a central cavity, resembling the structure of eukaryotic proteasomes.

The protein resides in the cytoplasm. The catalysed reaction is Hydrolysis of proteins to small peptides in the presence of ATP and magnesium. alpha-casein is the usual test substrate. In the absence of ATP, only oligopeptides shorter than five residues are hydrolyzed (such as succinyl-Leu-Tyr-|-NHMec, and Leu-Tyr-Leu-|-Tyr-Trp, in which cleavage of the -Tyr-|-Leu- and -Tyr-|-Trp bonds also occurs).. Its function is as follows. Cleaves peptides in various proteins in a process that requires ATP hydrolysis. Has a chymotrypsin-like activity. Plays a major role in the degradation of misfolded proteins. The sequence is that of ATP-dependent Clp protease proteolytic subunit from Helicobacter pylori (strain ATCC 700392 / 26695) (Campylobacter pylori).